The primary structure comprises 241 residues: Carboxy-S-adenosyl-L-methionine synthase (241 aa).

S-adenosyl-L-methionine is bound by residues tyrosine 38, 63–65, 88–89, 116–117, asparagine 131, and arginine 198; these read GCS, DN, and DI.

Belongs to the class I-like SAM-binding methyltransferase superfamily. Cx-SAM synthase family. As to quaternary structure, homodimer.

It catalyses the reaction prephenate + S-adenosyl-L-methionine = carboxy-S-adenosyl-L-methionine + 3-phenylpyruvate + H2O. Catalyzes the conversion of S-adenosyl-L-methionine (SAM) to carboxy-S-adenosyl-L-methionine (Cx-SAM). This chain is Carboxy-S-adenosyl-L-methionine synthase, found in Mannheimia succiniciproducens (strain KCTC 0769BP / MBEL55E).